Reading from the N-terminus, the 355-residue chain is Peptide chain release factor 1 (355 aa).

N5-methylglutamine is present on Gln233.

It belongs to the prokaryotic/mitochondrial release factor family. Methylated by PrmC. Methylation increases the termination efficiency of RF1.

It localises to the cytoplasm. Peptide chain release factor 1 directs the termination of translation in response to the peptide chain termination codons UAG and UAA. The chain is Peptide chain release factor 1 from Desulfitobacterium hafniense (strain DSM 10664 / DCB-2).